We begin with the raw amino-acid sequence, 145 residues long: D-aminoacyl-tRNA deacylase (145 aa).

The short motif at G137 to P138 is the Gly-cisPro motif, important for rejection of L-amino acids element.

The protein belongs to the DTD family. Homodimer.

Its subcellular location is the cytoplasm. The enzyme catalyses glycyl-tRNA(Ala) + H2O = tRNA(Ala) + glycine + H(+). The catalysed reaction is a D-aminoacyl-tRNA + H2O = a tRNA + a D-alpha-amino acid + H(+). In terms of biological role, an aminoacyl-tRNA editing enzyme that deacylates mischarged D-aminoacyl-tRNAs. Also deacylates mischarged glycyl-tRNA(Ala), protecting cells against glycine mischarging by AlaRS. Acts via tRNA-based rather than protein-based catalysis; rejects L-amino acids rather than detecting D-amino acids in the active site. By recycling D-aminoacyl-tRNA to D-amino acids and free tRNA molecules, this enzyme counteracts the toxicity associated with the formation of D-aminoacyl-tRNA entities in vivo and helps enforce protein L-homochirality. In Lactobacillus helveticus (strain DPC 4571), this protein is D-aminoacyl-tRNA deacylase.